The following is a 174-amino-acid chain: 3-hydroxyanthranilate 3,4-dioxygenase (174 aa).

Position 47 (Arg47) interacts with O2. 3 residues coordinate Fe cation: His51, Glu57, and His95. Residue Glu57 coordinates substrate. Substrate contacts are provided by Arg99 and Glu110. Positions 125, 128, 162, and 165 each coordinate Fe cation.

This sequence belongs to the 3-HAO family. As to quaternary structure, homodimer. Requires Fe(2+) as cofactor.

The enzyme catalyses 3-hydroxyanthranilate + O2 = (2Z,4Z)-2-amino-3-carboxymuconate 6-semialdehyde. It participates in cofactor biosynthesis; NAD(+) biosynthesis; quinolinate from L-kynurenine: step 3/3. Its activity is regulated as follows. Inhibited by 4-chloro-3-hydroxyanthranilate. Mechanism of inactivation involves the oxidation of the catalytic active site Fe(2+) to the catalytically inactive Fe(3+) oxidation state, superoxide production, and formation of two disulfide bonds between Cys-125 and Cys-128, and Cys-162 and Cys-165. Enzyme can be reactivated under reducing conditions. Its function is as follows. Catalyzes the oxidative ring opening of 3-hydroxyanthranilate to 2-amino-3-carboxymuconate semialdehyde, which spontaneously cyclizes to quinolinate. In Cupriavidus metallidurans (strain ATCC 43123 / DSM 2839 / NBRC 102507 / CH34) (Ralstonia metallidurans), this protein is 3-hydroxyanthranilate 3,4-dioxygenase.